Reading from the N-terminus, the 207-residue chain is 3-isopropylmalate dehydratase small subunit (207 aa).

Belongs to the LeuD family. LeuD type 1 subfamily. Heterodimer of LeuC and LeuD.

The catalysed reaction is (2R,3S)-3-isopropylmalate = (2S)-2-isopropylmalate. Its pathway is amino-acid biosynthesis; L-leucine biosynthesis; L-leucine from 3-methyl-2-oxobutanoate: step 2/4. Catalyzes the isomerization between 2-isopropylmalate and 3-isopropylmalate, via the formation of 2-isopropylmaleate. The polypeptide is 3-isopropylmalate dehydratase small subunit (leuD) (Buchnera aphidicola subsp. Pterocomma populeum).